We begin with the raw amino-acid sequence, 255 residues long: tRNA (guanine-N(1)-)-methyltransferase (255 aa).

Residues Gly-112 and 131-136 each bind S-adenosyl-L-methionine; that span reads LGDYVL.

Belongs to the RNA methyltransferase TrmD family. As to quaternary structure, homodimer.

Its subcellular location is the cytoplasm. It catalyses the reaction guanosine(37) in tRNA + S-adenosyl-L-methionine = N(1)-methylguanosine(37) in tRNA + S-adenosyl-L-homocysteine + H(+). In terms of biological role, specifically methylates guanosine-37 in various tRNAs. The protein is tRNA (guanine-N(1)-)-methyltransferase of Lacticaseibacillus paracasei (strain ATCC 334 / BCRC 17002 / CCUG 31169 / CIP 107868 / KCTC 3260 / NRRL B-441) (Lactobacillus paracasei).